Consider the following 1218-residue polypeptide: Thrombospondin type 1 domain-containing protein (1218 aa).

4 disordered regions span residues 82-101 (SAGFPRSASSSASSAPPCSS), 189-240 (SLEE…SRTR), 298-383 (HTAN…VNGL), and 445-471 (GGKSRRSEWRRKRTGMMASEARESHRG). The segment covering 201 to 210 (GYEEERERRS) has biased composition (basic and acidic residues). The segment covering 315–375 (SSRFTSKASS…SSPLSSSPDS (61 aa)) has biased composition (low complexity). Residues 638 to 704 (SCITGPWSEW…RRKCNLGACP (67 aa)) enclose the TSP type-1 domain. A helical membrane pass occupies residues 886-906 (GVSHLWISLCAGAVAAVVFLV). The interval 1129–1153 (RRRARRGRREGDSGEGGDCGEARKA) is disordered.

In terms of assembly, component of a complex, at least composed of cysteine repeat modular protein A (CRMPa), cysteine repeat modular protein B (CRMPb), micronemal protein 15 (MIC15) and thrombospondin type 1 domain-containing protein (TSP1).

It is found in the membrane. Functionally, required for rhoptry secretion. Plays a role in host cell invasion. This is Thrombospondin type 1 domain-containing protein from Toxoplasma gondii.